A 90-amino-acid chain; its full sequence is 10 kDa anti-sigma factor (90 aa).

In terms of assembly, interacts with the host sigma factor RpoD, and thereby inhibits its interaction with the catalytic core of the host RNA polymerase.

Functionally, transcriptional inhibitor. Inhibits sigma 70-directed transcription by weakening its interaction with the core of the host's RNA polymerase. This allows Gp55 to successfully compete for the core enzyme. Plays an important role during the prereplicative period of phage T4 development. This Enterobacteria phage T4 (Bacteriophage T4) protein is 10 kDa anti-sigma factor (asiA).